The chain runs to 290 residues: MFSGSIVALVTPMRNDSVDVHHLRELVEFHIAKGTHALVAAGTTGEAGTLSHSEKLLVIKTVIEQAKERVPVIAGTAMNATKDCIELTQQAMEYGAHAALIMTPAYIKPTQEGLYLHYSHIAQSVAIPIILYNVPGRTACDMLPETVARLAKISNIIGIKEATGQMTRLQQILRLCEGSIDVYSGDDLTAAQWLLAGAKGVISVTANVAAKLMAKMCDLAMDDDQAGCLRIQEQLMPLHELLFVESNPIPVKWAMNKMGLIGGELRLPMTELSEKHHQALEKVLKNLELI.

Thr44 lines the pyruvate pocket. The Proton donor/acceptor role is filled by Tyr132. Lys160 functions as the Schiff-base intermediate with substrate in the catalytic mechanism. Pyruvate is bound at residue Ile202.

This sequence belongs to the DapA family. As to quaternary structure, homotetramer; dimer of dimers.

Its subcellular location is the cytoplasm. The enzyme catalyses L-aspartate 4-semialdehyde + pyruvate = (2S,4S)-4-hydroxy-2,3,4,5-tetrahydrodipicolinate + H2O + H(+). The protein operates within amino-acid biosynthesis; L-lysine biosynthesis via DAP pathway; (S)-tetrahydrodipicolinate from L-aspartate: step 3/4. Its function is as follows. Catalyzes the condensation of (S)-aspartate-beta-semialdehyde [(S)-ASA] and pyruvate to 4-hydroxy-tetrahydrodipicolinate (HTPA). The sequence is that of 4-hydroxy-tetrahydrodipicolinate synthase from Legionella pneumophila subsp. pneumophila (strain Philadelphia 1 / ATCC 33152 / DSM 7513).